The primary structure comprises 394 residues: Probable fatty acid methyltransferase (394 aa).

S-adenosyl-L-methionine contacts are provided by residues 128-129, 163-171, and 189-194; these read YS, LLDVGCGWG, and TLSKEQ. The active site involves Cys-358.

This sequence belongs to the CFA/CMAS family.

The sequence is that of Probable fatty acid methyltransferase from Pseudomonas putida (Arthrobacter siderocapsulatus).